A 152-amino-acid polypeptide reads, in one-letter code: FAD synthase (152 aa).

ATP-binding positions include Thr16–Phe17, His21–His24, Asp101, and Tyr129.

Belongs to the archaeal FAD synthase family. Homodimer. A divalent metal cation is required as a cofactor.

It catalyses the reaction FMN + ATP + H(+) = FAD + diphosphate. It participates in cofactor biosynthesis; FAD biosynthesis; FAD from FMN: step 1/1. Catalyzes the transfer of the AMP portion of ATP to flavin mononucleotide (FMN) to produce flavin adenine dinucleotide (FAD) coenzyme. In Methanocaldococcus vulcanius (strain ATCC 700851 / DSM 12094 / M7) (Methanococcus vulcanius), this protein is FAD synthase.